A 165-amino-acid chain; its full sequence is Ecotin-like protein 4 (165 aa).

The protein belongs to the protease inhibitor I11 (ecotin) family.

In Trypanosoma brucei brucei (strain 927/4 GUTat10.1), this protein is Ecotin-like protein 4.